Here is a 91-residue protein sequence, read N- to C-terminus: Metalloproteinase inhibitor 2 (91 aa).

One can recognise an NTR domain in the interval 1 to 91; the sequence is KAVSEKEVDS…FIVPWDTLST (91 aa).

It belongs to the protease inhibitor I35 (TIMP) family. In terms of processing, the activity of TIMP2 is dependent on the presence of disulfide bonds.

The protein localises to the secreted. In terms of biological role, complexes with metalloproteinases (such as collagenases) and irreversibly inactivates them. In Equus caballus (Horse), this protein is Metalloproteinase inhibitor 2 (TIMP2).